The following is an 81-amino-acid chain: Cytochrome b559 subunit alpha (81 aa).

Residues 21–35 (VIHALTIPALFLAGW) form a helical membrane-spanning segment. His-23 serves as a coordination point for heme.

Belongs to the PsbE/PsbF family. In terms of assembly, heterodimer of an alpha subunit and a beta subunit. PSII is composed of 1 copy each of membrane proteins PsbA, PsbB, PsbC, PsbD, PsbE, PsbF, PsbH, PsbI, PsbJ, PsbK, PsbL, PsbM, PsbT, PsbX, PsbY, PsbZ, Psb30/Ycf12, peripheral proteins PsbO, CyanoQ (PsbQ), PsbU, PsbV and a large number of cofactors. It forms dimeric complexes. Requires heme b as cofactor.

Its subcellular location is the cellular thylakoid membrane. This b-type cytochrome is tightly associated with the reaction center of photosystem II (PSII). PSII is a light-driven water:plastoquinone oxidoreductase that uses light energy to abstract electrons from H(2)O, generating O(2) and a proton gradient subsequently used for ATP formation. It consists of a core antenna complex that captures photons, and an electron transfer chain that converts photonic excitation into a charge separation. In Synechococcus sp. (strain JA-2-3B'a(2-13)) (Cyanobacteria bacterium Yellowstone B-Prime), this protein is Cytochrome b559 subunit alpha.